We begin with the raw amino-acid sequence, 644 residues long: Probable potassium transport system protein Kup 2 (644 aa).

The segment at 1-21 (MSSDAAAVADRDGSSPGHGGH) is disordered. 12 consecutive transmembrane segments (helical) span residues 26–46 (LGAM…TSPL), 69–89 (VLSL…VAII), 120–140 (IILL…ITPA), 155–175 (AGFA…LFMI), 183–203 (VGML…VLGT), 231–251 (LAFL…ALYA), 265–285 (WLVF…AMIL), 312–332 (LVIL…TGAF), 360–380 (IYIP…VMSF), 390–410 (YGIA…VVLI), 419–439 (LAAP…GANL), and 444–464 (DGGW…TTWG).

It belongs to the HAK/KUP transporter (TC 2.A.72) family.

The protein resides in the cell inner membrane. The enzyme catalyses K(+)(in) + H(+)(in) = K(+)(out) + H(+)(out). In terms of biological role, transport of potassium into the cell. Likely operates as a K(+):H(+) symporter. In Rhizorhabdus wittichii (strain DSM 6014 / CCUG 31198 / JCM 15750 / NBRC 105917 / EY 4224 / RW1) (Sphingomonas wittichii), this protein is Probable potassium transport system protein Kup 2.